Reading from the N-terminus, the 188-residue chain is GMP synthase [glutamine-hydrolyzing] subunit A (188 aa).

One can recognise a Glutamine amidotransferase type-1 domain in the interval 2-188; the sequence is KVGLVYYGGQ…FKNFLGVCRK (187 aa). Cys-79 (nucleophile) is an active-site residue. Residues His-166 and Glu-168 contribute to the active site.

As to quaternary structure, heterodimer composed of a glutamine amidotransferase subunit (A) and a GMP-binding subunit (B).

The enzyme catalyses XMP + L-glutamine + ATP + H2O = GMP + L-glutamate + AMP + diphosphate + 2 H(+). It participates in purine metabolism; GMP biosynthesis; GMP from XMP (L-Gln route): step 1/1. Catalyzes the synthesis of GMP from XMP. The sequence is that of GMP synthase [glutamine-hydrolyzing] subunit A from Saccharolobus solfataricus (strain ATCC 35092 / DSM 1617 / JCM 11322 / P2) (Sulfolobus solfataricus).